Consider the following 215-residue polypeptide: Cytochrome b6 (215 aa).

Residues 32–52 (IFYCLGGITLTCFLVQVATGF) traverse the membrane as a helical segment. Residue Cys35 participates in heme c binding. Positions 86 and 100 each coordinate heme b. 3 helical membrane passes run 90-110 (ASMM…TGGF), 116-136 (LTWV…VTGY), and 186-206 (LHTF…FPMI). The heme b site is built by His187 and His202.

Belongs to the cytochrome b family. PetB subfamily. As to quaternary structure, the 4 large subunits of the cytochrome b6-f complex are cytochrome b6, subunit IV (17 kDa polypeptide, PetD), cytochrome f and the Rieske protein, while the 4 small subunits are PetG, PetL, PetM and PetN. The complex functions as a dimer. Heme b serves as cofactor. The cofactor is heme c.

The protein localises to the plastid. It localises to the chloroplast thylakoid membrane. Functionally, component of the cytochrome b6-f complex, which mediates electron transfer between photosystem II (PSII) and photosystem I (PSI), cyclic electron flow around PSI, and state transitions. In Phalaenopsis aphrodite subsp. formosana (Moth orchid), this protein is Cytochrome b6.